A 742-amino-acid chain; its full sequence is Photosystem I P700 chlorophyll a apoprotein A2 (742 aa).

Transmembrane regions (helical) follow at residues 46-69 (LFST…FHIA), 135-158 (LFQA…LHLQ), 175-199 (LNHH…HVAI), 273-291 (IAHH…GHMY), 336-359 (LHFQ…QHMG), 375-401 (SALY…IFFV), 423-445 (ALIS…IYVH), and 525-543 (FLVH…LILI). Cys-567 and Cys-576 together coordinate [4Fe-4S] cluster. Helical transmembrane passes span 583–604 (AMYL…YWHW) and 651–673 (LSPW…MFLI). Positions 662, 670, and 678 each coordinate divinyl chlorophyll a. Trp-679 contributes to the phylloquinone binding site. The helical transmembrane segment at 715-735 (LVGLAHFTIGNILTFGAFVIA) threads the bilayer.

This sequence belongs to the PsaA/PsaB family. The PsaA/B heterodimer binds the P700 divinyl chlorophyll special pair and subsequent electron acceptors. PSI consists of a core antenna complex that captures photons, and an electron transfer chain that converts photonic excitation into a charge separation. The cyanobacterial PSI reaction center is composed of one copy each of PsaA,B,C,D,E,F,I,J,K,L,M and X, and forms trimeric complexes. PSI electron transfer chain: 5 divinyl chlorophyll a, 1 divinyl chlorophyll a', 2 phylloquinones and 3 4Fe-4S clusters. PSI core antenna: 90 divinyl chlorophyll a, 22 carotenoids, 3 phospholipids and 1 galactolipid. P700 is a divinyl chlorophyll a/divinyl chlorophyll a' dimer, A0 is one or more divinyl chlorophyll a, A1 is one or both phylloquinones and FX is a shared 4Fe-4S iron-sulfur center. serves as cofactor.

It localises to the cellular thylakoid membrane. It carries out the reaction reduced [plastocyanin] + hnu + oxidized [2Fe-2S]-[ferredoxin] = oxidized [plastocyanin] + reduced [2Fe-2S]-[ferredoxin]. PsaA and PsaB bind P700, the primary electron donor of photosystem I (PSI), as well as the electron acceptors A0, A1 and FX. PSI is a plastocyanin/cytochrome c6-ferredoxin oxidoreductase, converting photonic excitation into a charge separation, which transfers an electron from the donor P700 chlorophyll pair to the spectroscopically characterized acceptors A0, A1, FX, FA and FB in turn. Oxidized P700 is reduced on the lumenal side of the thylakoid membrane by plastocyanin or cytochrome c6. The polypeptide is Photosystem I P700 chlorophyll a apoprotein A2 (Prochlorococcus marinus (strain MIT 9301)).